The primary structure comprises 225 residues: LexA repressor (225 aa).

The segment at residues 26-46 is a DNA-binding region (H-T-H motif); the sequence is YEEMKDSLNLKSKSGIHRLIS. Catalysis depends on for autocatalytic cleavage activity residues Ser-146 and Lys-184.

Belongs to the peptidase S24 family. In terms of assembly, homodimer.

It catalyses the reaction Hydrolysis of Ala-|-Gly bond in repressor LexA.. Functionally, represses a number of genes involved in the response to DNA damage (SOS response), including recA and lexA. In the presence of single-stranded DNA, RecA interacts with LexA causing an autocatalytic cleavage which disrupts the DNA-binding part of LexA, leading to derepression of the SOS regulon and eventually DNA repair. The protein is LexA repressor of Pelagibacter ubique (strain HTCC1062).